A 367-amino-acid chain; its full sequence is Queuine tRNA-ribosyltransferase (367 aa).

The Proton acceptor role is filled by Asp-89. Residues 89-93 (DSGGF), Asp-143, Gln-187, and Gly-214 each bind substrate. The tract at residues 245–251 (GVGTPAD) is RNA binding. Catalysis depends on Asp-264, which acts as the Nucleophile. The tract at residues 269–273 (TRNAR) is RNA binding; important for wobble base 34 recognition. Residues Cys-302, Cys-304, Cys-307, and His-333 each coordinate Zn(2+).

The protein belongs to the queuine tRNA-ribosyltransferase family. In terms of assembly, homodimer. Within each dimer, one monomer is responsible for RNA recognition and catalysis, while the other monomer binds to the replacement base PreQ1. Requires Zn(2+) as cofactor.

It carries out the reaction 7-aminomethyl-7-carbaguanine + guanosine(34) in tRNA = 7-aminomethyl-7-carbaguanosine(34) in tRNA + guanine. Its pathway is tRNA modification; tRNA-queuosine biosynthesis. In terms of biological role, catalyzes the base-exchange of a guanine (G) residue with the queuine precursor 7-aminomethyl-7-deazaguanine (PreQ1) at position 34 (anticodon wobble position) in tRNAs with GU(N) anticodons (tRNA-Asp, -Asn, -His and -Tyr). Catalysis occurs through a double-displacement mechanism. The nucleophile active site attacks the C1' of nucleotide 34 to detach the guanine base from the RNA, forming a covalent enzyme-RNA intermediate. The proton acceptor active site deprotonates the incoming PreQ1, allowing a nucleophilic attack on the C1' of the ribose to form the product. After dissociation, two additional enzymatic reactions on the tRNA convert PreQ1 to queuine (Q), resulting in the hypermodified nucleoside queuosine (7-(((4,5-cis-dihydroxy-2-cyclopenten-1-yl)amino)methyl)-7-deazaguanosine). The sequence is that of Queuine tRNA-ribosyltransferase from Nitrosospira multiformis (strain ATCC 25196 / NCIMB 11849 / C 71).